The sequence spans 206 residues: Ribosome maturation factor RimM (206 aa).

The PRC barrel domain occupies 113–206 (DDEYYWVDLI…RIDSNWPTEL (94 aa)).

Belongs to the RimM family. In terms of assembly, binds ribosomal protein uS19.

It is found in the cytoplasm. Its function is as follows. An accessory protein needed during the final step in the assembly of 30S ribosomal subunit, possibly for assembly of the head region. Essential for efficient processing of 16S rRNA. May be needed both before and after RbfA during the maturation of 16S rRNA. It has affinity for free ribosomal 30S subunits but not for 70S ribosomes. The chain is Ribosome maturation factor RimM from Bordetella petrii (strain ATCC BAA-461 / DSM 12804 / CCUG 43448).